A 196-amino-acid chain; its full sequence is Probable cobalt-precorrin-6B C(15)-methyltransferase (decarboxylating) (196 aa).

S-adenosyl-L-methionine is bound by residues Thr-24, 48–52, Asp-72, and Ala-101; that span reads GCGTG.

It belongs to the methyltransferase superfamily. Archaeal-type CbiT family.

It carries out the reaction Co-precorrin-6B + S-adenosyl-L-methionine = Co-precorrin-7 + S-adenosyl-L-homocysteine + CO2. Its pathway is cofactor biosynthesis; adenosylcobalamin biosynthesis; cob(II)yrinate a,c-diamide from sirohydrochlorin (anaerobic route): step 8/10. Functionally, catalyzes the methylation of C-15 in cobalt-precorrin-6B followed by the decarboxylation of C-12 to form cobalt-precorrin-7. This chain is Probable cobalt-precorrin-6B C(15)-methyltransferase (decarboxylating), found in Pyrobaculum aerophilum (strain ATCC 51768 / DSM 7523 / JCM 9630 / CIP 104966 / NBRC 100827 / IM2).